A 161-amino-acid chain; its full sequence is Large ribosomal subunit protein uL16 (161 aa).

Residues Leu140–Ser161 are disordered.

It belongs to the universal ribosomal protein uL16 family. Part of the 50S ribosomal subunit.

In terms of biological role, binds 23S rRNA and is also seen to make contacts with the A and possibly P site tRNAs. The polypeptide is Large ribosomal subunit protein uL16 (Prochlorococcus marinus (strain NATL2A)).